The sequence spans 176 residues: Ribosome maturation factor RimM (176 aa).

In terms of domain architecture, PRC barrel spans 97 to 176 (DNDFYHRDLI…QIVVDWDPDF (80 aa)).

It belongs to the RimM family. In terms of assembly, binds ribosomal protein uS19.

It localises to the cytoplasm. Functionally, an accessory protein needed during the final step in the assembly of 30S ribosomal subunit, possibly for assembly of the head region. Essential for efficient processing of 16S rRNA. May be needed both before and after RbfA during the maturation of 16S rRNA. It has affinity for free ribosomal 30S subunits but not for 70S ribosomes. The protein is Ribosome maturation factor RimM of Shewanella denitrificans (strain OS217 / ATCC BAA-1090 / DSM 15013).